A 179-amino-acid polypeptide reads, in one-letter code: Large ribosomal subunit protein uL5 (179 aa).

It belongs to the universal ribosomal protein uL5 family. In terms of assembly, part of the 50S ribosomal subunit; contacts the 5S rRNA and probably tRNA. Forms a bridge to the 30S subunit in the 70S ribosome.

This is one of the proteins that bind and probably mediate the attachment of the 5S RNA into the large ribosomal subunit, where it forms part of the central protuberance. In the 70S ribosome it contacts protein S13 of the 30S subunit (bridge B1b), connecting the 2 subunits; this bridge is implicated in subunit movement. May contact the P site tRNA; the 5S rRNA and some of its associated proteins might help stabilize positioning of ribosome-bound tRNAs. This chain is Large ribosomal subunit protein uL5, found in Pyrobaculum aerophilum (strain ATCC 51768 / DSM 7523 / JCM 9630 / CIP 104966 / NBRC 100827 / IM2).